The sequence spans 115 residues: Macrophage migration inhibitory factor (115 aa).

Pro2 (proton acceptor; via imino nitrogen) is an active-site residue. Substrate contacts are provided by Lys33 and Ile65. Residue Lys78 is modified to N6-acetyllysine; alternate. At Lys78 the chain carries N6-succinyllysine; alternate. Position 98 (Asn98) interacts with substrate.

It belongs to the MIF family. As to quaternary structure, homotrimer. Interacts with CXCR2 extracellular domain. Interacts with the CD74 extracellular domain, USO1, COPS5 and BNIPL.

It localises to the secreted. It is found in the cytoplasm. It catalyses the reaction 3-phenylpyruvate = enol-phenylpyruvate. The enzyme catalyses L-dopachrome = 5,6-dihydroxyindole-2-carboxylate. Its function is as follows. Pro-inflammatory cytokine involved in the innate immune response to bacterial pathogens. The expression of MIF at sites of inflammation suggests a role as mediator in regulating the function of macrophages in host defense. Counteracts the anti-inflammatory activity of glucocorticoids. Has phenylpyruvate tautomerase and dopachrome tautomerase activity (in vitro), but the physiological substrate is not known. It is not clear whether the tautomerase activity has any physiological relevance, and whether it is important for cytokine activity. This Meriones unguiculatus (Mongolian jird) protein is Macrophage migration inhibitory factor (MIF).